A 283-amino-acid polypeptide reads, in one-letter code: Nucleotide-binding protein Sama_3091 (283 aa).

ATP is bound at residue 8 to 15; that stretch reads GRSGSGKS. Residue 56 to 59 participates in GTP binding; sequence DIRN.

The protein belongs to the RapZ-like family.

Its function is as follows. Displays ATPase and GTPase activities. The protein is Nucleotide-binding protein Sama_3091 of Shewanella amazonensis (strain ATCC BAA-1098 / SB2B).